A 354-amino-acid chain; its full sequence is Fructose-bisphosphate aldolase (354 aa).

Ser-50 is a binding site for D-glyceraldehyde 3-phosphate. Catalysis depends on Asp-83, which acts as the Proton donor. 4 residues coordinate Zn(2+): His-84, Asp-105, Glu-142, and His-198. A dihydroxyacetone phosphate-binding site is contributed by Gly-199. Zn(2+) is bound at residue His-232. Residues 233–235 (GSS) and 275–278 (NIDT) each bind dihydroxyacetone phosphate.

This sequence belongs to the class II fructose-bisphosphate aldolase family. The cofactor is Zn(2+).

The enzyme catalyses beta-D-fructose 1,6-bisphosphate = D-glyceraldehyde 3-phosphate + dihydroxyacetone phosphate. The protein operates within carbohydrate degradation; glycolysis; D-glyceraldehyde 3-phosphate and glycerone phosphate from D-glucose: step 4/4. Catalyzes the aldol condensation of dihydroxyacetone phosphate (DHAP or glycerone-phosphate) with glyceraldehyde 3-phosphate (G3P) to form fructose 1,6-bisphosphate (FBP) in gluconeogenesis and the reverse reaction in glycolysis. This Stutzerimonas stutzeri (Pseudomonas stutzeri) protein is Fructose-bisphosphate aldolase (fba).